We begin with the raw amino-acid sequence, 218 residues long: Chymotrypsin-2 (218 aa).

Residues 1 to 218 (IVGGTDAPRG…FLDWIQKNQL (218 aa)) enclose the Peptidase S1 domain. An intrachain disulfide couples C25 to C40. Catalysis depends on charge relay system residues H39 and D84. Disulfide bonds link C148–C161 and C171–C195. S175 acts as the Charge relay system in catalysis.

Belongs to the peptidase S1 family.

The protein resides in the secreted. It localises to the extracellular space. It carries out the reaction Preferential cleavage: Tyr-|-Xaa, Trp-|-Xaa, Phe-|-Xaa, Leu-|-Xaa.. The polypeptide is Chymotrypsin-2 (Vespa crabro (European hornet)).